We begin with the raw amino-acid sequence, 218 residues long: Large ribosomal subunit protein uL2c (218 aa).

The interval G165 to P192 is disordered.

The protein belongs to the universal ribosomal protein uL2 family. Part of the 50S ribosomal subunit.

The protein resides in the plastid. Its subcellular location is the chloroplast. This Bigelowiella natans (Pedinomonas minutissima) protein is Large ribosomal subunit protein uL2c (rpl2).